A 333-amino-acid polypeptide reads, in one-letter code: MSAPIVHGGGITEAAARYGGRPEDWLDLSTGINPCPVALPAVPERAWHRLPDRQTVDDARSAAADYYRTNGVLPLPVPGTQSVIQLLPRLAPANRHVAIFGPTYGEYARVLEAAGFAVDRVADADALTAEHGLVIVVNPNNPTGRALAPAELLAIAARQKASGGLLLVDEAFGDLEPQLSVAGHASGQGNLIVFRSFGKFFGLAGLRLGFVVATEPVLASFADWLGPWAVSGPALTISKALMQGDTKAIAAGILERRAGLDAALDGAGLNRIGGTGLFVLVEHPRAALLQERLCEAHILTRKFDYAPTWLRVGLAPDAAGDRRLADALARMEL.

An N6-(pyridoxal phosphate)lysine modification is found at K199.

The protein belongs to the class-I pyridoxal-phosphate-dependent aminotransferase family. Homodimer. Pyridoxal 5'-phosphate serves as cofactor.

The protein resides in the cytoplasm. It carries out the reaction O-phospho-L-threonine + H(+) = (R)-1-aminopropan-2-yl phosphate + CO2. It participates in cofactor biosynthesis; adenosylcobalamin biosynthesis. Functionally, decarboxylates L-threonine-O-3-phosphate to yield (R)-1-amino-2-propanol O-2-phosphate, the precursor for the linkage between the nucleotide loop and the corrin ring in cobalamin. The chain is Threonine-phosphate decarboxylase (cobC) from Sinorhizobium sp.